We begin with the raw amino-acid sequence, 426 residues long: MSRYDVVVYGASGFTGAYVVEYLVNSEQFEGLSFAVAGRSEKKLREVLRNISQKTGKDVSNAAVIVADSADERSLNEMARQANVVINAVGPYRLYGEAVVKAAVENGASHVDISGEPAWIEKMQQKYSKQAKEQGVYVVSACGWDSIPADLGVNFLKKNFHGDLNHVESFVQLLTGPSGYSFNAGTYQTLILGLSGAATDKLGAVRKEIMPEKIVRGAVKLPKRPTLWEIKEKELNGVAVPFPGADKSIINRSQYYDATSRQVRPIHMETYIRLSSQFYGYLIGLWIMFLSIFVKYPFTRRILQQYPDQCSFYMFKNSGPSARQMAEASFVYWFFGYGYKETLPLDQQHEGKINRKVLATCKGPDAGYIATSGCVLSAALTLIRDKDNLPKDGGVYTTAAAFGNSKIYDYLASFGITYQLESEYDL.

The helical transmembrane segment at 278-298 (FYGYLIGLWIMFLSIFVKYPF) threads the bilayer.

This sequence belongs to the saccharopine dehydrogenase family.

It localises to the membrane. The protein localises to the lipid droplet. In Caenorhabditis elegans, this protein is Lipid droplet localized protein.